The following is a 202-amino-acid chain: Small ribosomal subunit protein uS4c (202 aa).

The S4 RNA-binding domain maps to 90-153 (MRLDNIIFRL…KSETIISKNI (64 aa)).

Belongs to the universal ribosomal protein uS4 family. As to quaternary structure, part of the 30S ribosomal subunit. Contacts protein S5. The interaction surface between S4 and S5 is involved in control of translational fidelity.

Its subcellular location is the plastid. It localises to the chloroplast. One of the primary rRNA binding proteins, it binds directly to 16S rRNA where it nucleates assembly of the body of the 30S subunit. Its function is as follows. With S5 and S12 plays an important role in translational accuracy. In Catharomnion ciliatum (Moss), this protein is Small ribosomal subunit protein uS4c (rps4).